Reading from the N-terminus, the 677-residue chain is Fermitin family homolog 1 (677 aa).

An FERM domain is found at 96-653; sequence MLRLRLPNAK…HEYIGGYIFL (558 aa). Residues 157–181 form a disordered region; sequence KEPVIEDILNLESSSTSSGSPVSPG. Over residues 169–181 the composition is skewed to low complexity; it reads SSSTSSGSPVSPG. Phosphoserine occurs at positions 170 and 179. The PH domain occupies 377-473; it reads KLFRPKKLML…WMAACILASK (97 aa).

This sequence belongs to the kindlin family. As to quaternary structure, interacts with the cytoplasmic domain of integrins ITGB1 and ITGB3.

It localises to the cytoplasm. It is found in the cytoskeleton. Its subcellular location is the cell junction. The protein resides in the focal adhesion. The protein localises to the cell projection. It localises to the ruffle membrane. Involved in cell adhesion. Contributes to integrin activation. When coexpressed with talin, potentiates activation of ITGA2B. Required for normal keratinocyte proliferation. Required for normal polarization of basal keratinocytes in skin, and for normal cell shape. Required for normal adhesion of keratinocytes to fibronectin and laminin, and for normal keratinocyte migration to wound sites. This is Fermitin family homolog 1 (Fermt1) from Mus musculus (Mouse).